A 421-amino-acid polypeptide reads, in one-letter code: MKDFADIPALMAEIGTAAKAAAAELAFAPADQRAQALTAAADAVWARRDEIIAANARDLDYGRDKGLSPAMMDRLALDEARIQGIVDGLRAVAAQDDPVGAVLSEWDRPTGLHIRRVRTPLGVIGVIYESRPNVTADAGALCLKSGNAVILRGGSESFHSSSLIHACLRDGLRAADLPETAIQLVPTRDRAAVGEMLTMTDTIDVIIPRGGKGLVGRVQAEARVPVFAHLEGICHIYVDADADPDKTARVILNAKTRRTGICGAAECLLVDRAWYDRNGATFIADLIAAGVEVRADDTLQAIPGTVPAKADDFGREFLDMIIAARVVDGVDGAIAHIRRYGSQHTDCILTENDATAARFFQRLDSAILMRNASTQFADGGEFGMGAEIGIATGKMHARGPVGAEQLTSFKYLVEGDGTIRA.

Belongs to the gamma-glutamyl phosphate reductase family.

Its subcellular location is the cytoplasm. The catalysed reaction is L-glutamate 5-semialdehyde + phosphate + NADP(+) = L-glutamyl 5-phosphate + NADPH + H(+). It participates in amino-acid biosynthesis; L-proline biosynthesis; L-glutamate 5-semialdehyde from L-glutamate: step 2/2. Its function is as follows. Catalyzes the NADPH-dependent reduction of L-glutamate 5-phosphate into L-glutamate 5-semialdehyde and phosphate. The product spontaneously undergoes cyclization to form 1-pyrroline-5-carboxylate. The sequence is that of Gamma-glutamyl phosphate reductase from Dinoroseobacter shibae (strain DSM 16493 / NCIMB 14021 / DFL 12).